Reading from the N-terminus, the 420-residue chain is Probable glycosyltransferase YdaM (420 aa).

The next 4 helical transmembrane spans lie at 4 to 24 (TLFF…MFLM), 299 to 319 (IIFD…GVIM), 332 to 352 (LHLS…FLFM), and 371 to 391 (FFIV…LVIY).

This sequence belongs to the glycosyltransferase 2 family.

The protein resides in the cell membrane. The chain is Probable glycosyltransferase YdaM (ydaM) from Bacillus subtilis (strain 168).